Consider the following 295-residue polypeptide: Tyrosine recombinase XerC (295 aa).

Residues 1-85 form the Core-binding (CB) domain; it reads MQNALQKYYD…ALRQFLAYLV (85 aa). Residues 106–285 form the Tyr recombinase domain; that stretch reads YLPKNIDQEQ…DFKHLTDVYD (180 aa). Active-site residues include Arg145, Lys169, His237, Arg240, and His263. The active-site O-(3'-phospho-DNA)-tyrosine intermediate is Tyr272.

It belongs to the 'phage' integrase family. XerC subfamily. As to quaternary structure, forms a cyclic heterotetrameric complex composed of two molecules of XerC and two molecules of XerD.

The protein localises to the cytoplasm. Site-specific tyrosine recombinase, which acts by catalyzing the cutting and rejoining of the recombining DNA molecules. The XerC-XerD complex is essential to convert dimers of the bacterial chromosome into monomers to permit their segregation at cell division. It also contributes to the segregational stability of plasmids. In Actinobacillus succinogenes (strain ATCC 55618 / DSM 22257 / CCUG 43843 / 130Z), this protein is Tyrosine recombinase XerC.